The primary structure comprises 56 residues: uncharacterized protein (56 aa).

This is an uncharacterized protein from Bacillus subtilis (strain 168).